The chain runs to 1257 residues: Neurocan core protein (1257 aa).

A signal peptide spans 1-22 (MGAESVWASGLLVLWLLLLVSG). In terms of domain architecture, Ig-like V-type spans 37–157 (HMLKSGSGPI…EQDLVTLEVT (121 aa)). 5 disulfide bridges follow: C58-C139, C181-C252, C205-C226, C279-C354, and C303-C324. An N-linked (GlcNAc...) asparagine glycan is attached at N121. 2 consecutive Link domains span residues 159–254 (VVFH…YCFA) and 258–356 (GGEV…YCFR). N339 is a glycosylation site (N-linked (GlcNAc...) asparagine). Positions 361-391 (TPQRGDSEIPSSGDEGEIVSAEGPPAPELKP) are disordered. O-linked (Xyl...) (chondroitin sulfate) serine glycans are attached at residues S380 and S410. The span at 447-459 (SSTGVPSPSSLGV) shows a compositional bias: low complexity. 3 disordered regions span residues 447 to 493 (SSTG…FQQQ), 550 to 610 (GSLG…AVPS), and 683 to 707 (GAEDPETPFQTTMAAPGEASHGSPE). Residues 464–473 (TTPSGTQVAP) are compositionally biased toward polar residues. The segment covering 569–580 (SPSTVPSTDSTP) has biased composition (low complexity). Residue N737 is glycosylated (N-linked (GlcNAc...) asparagine). Residue S944 is glycosylated (O-linked (Xyl...) (chondroitin sulfate) serine). The EGF-like 1 domain maps to 949–985 (PTDPCENNPCLHGGTCRTNGTMYGCSCDQGYAGENCE). Disulfide bonds link C953-C964, C958-C973, C975-C984, C991-C1002, C996-C1011, C1013-C1022, C1029-C1040, C1057-C1149, C1125-C1141, C1156-C1199, and C1185-C1212. The N-linked (GlcNAc...) asparagine glycan is linked to N967. An EGF-like 2; calcium-binding domain is found at 987–1023 (DIDDCLCSPCENGGTCIDEVNGFICLCLPSYGGNLCE). The C-type lectin domain occupies 1025 to 1154 (DTEGCDRGWH…LPYVCKKGTV (130 aa)). In terms of domain architecture, Sushi spans 1154–1214 (VLCGPPPAVE…WDRPQIVCTK (61 aa)). Residue N1164 is glycosylated (N-linked (GlcNAc...) asparagine). Residues 1215–1244 (PRRSHRMRRHHHHPHRHHKPRKEHRKHKRH) show a composition bias toward basic residues. Residues 1215-1257 (PRRSHRMRRHHHHPHRHHKPRKEHRKHKRHPAEDWEKDEGDFC) form a disordered region.

Belongs to the aggrecan/versican proteoglycan family. Post-translationally, two isoforms were found that probably arise by proteolytic processing. The large isoform is predominant in early postnatal brain, the small isoform is found in adult brain. O-glycosylated; contains chondroitin sulfate. In terms of tissue distribution, early postnatal and adult brain; not expressed in kidney, lung, liver and muscle.

Its subcellular location is the secreted. Its function is as follows. May modulate neuronal adhesion and neurite growth during development by binding to neural cell adhesion molecules (NG-CAM and N-CAM). Chondroitin sulfate proteoglycan; binds to hyaluronic acid. The polypeptide is Neurocan core protein (Ncan) (Rattus norvegicus (Rat)).